The chain runs to 277 residues: F420-dependent methylenetetrahydromethanopterin dehydrogenase (277 aa).

It belongs to the MTD family.

It carries out the reaction 5,10-methylenetetrahydromethanopterin + oxidized coenzyme F420-(gamma-L-Glu)(n) + 2 H(+) = 5,10-methenyl-5,6,7,8-tetrahydromethanopterin + reduced coenzyme F420-(gamma-L-Glu)(n). It participates in one-carbon metabolism; methanogenesis from CO(2); 5,10-methylene-5,6,7,8-tetrahydromethanopterin from 5,10-methenyl-5,6,7,8-tetrahydromethanopterin (coenzyme F420 route): step 1/1. Functionally, catalyzes the reversible reduction of methenyl-H(4)MPT(+) to methylene-H(4)MPT. In Methanococcus maripaludis (strain DSM 14266 / JCM 13030 / NBRC 101832 / S2 / LL), this protein is F420-dependent methylenetetrahydromethanopterin dehydrogenase.